Consider the following 376-residue polypeptide: GDSL esterase/lipase 2 (376 aa).

A signal peptide spans 1 to 25 (MENSRSTLIIFFAYTTIILIGSINC). The N-linked (GlcNAc...) asparagine glycan is linked to Asn-36. The active-site Nucleophile is Ser-46. N-linked (GlcNAc...) asparagine glycans are attached at residues Asn-186 and Asn-205. Residues Asp-340 and His-343 contribute to the active site. Residue Asn-362 is glycosylated (N-linked (GlcNAc...) asparagine).

It belongs to the 'GDSL' lipolytic enzyme family. In terms of tissue distribution, expressed seedlings, roots and stems.

The protein resides in the secreted. Functionally, involved in the resistance to the necrotropic bacteria Erwinia carotovora, probably via negative regulation of auxin signaling. Possesses lipase and antimicrobial activities, inhibiting germination of fungal spores (e.g. Alternaria brassicicola). The polypeptide is GDSL esterase/lipase 2 (GLIP2) (Arabidopsis thaliana (Mouse-ear cress)).